The sequence spans 504 residues: Glucosaminyl-phosphatidylinositol-acyltransferase PIGW (504 aa).

Topologically, residues 1 to 21 (MSEKQMKEAFVSNLNGTTVLE) are lumenal. N-linked (GlcNAc...) asparagine glycosylation is present at Asn-15. A helical membrane pass occupies residues 22-42 (ITQGLCFPAFCILCRGFLIIF). The Cytoplasmic portion of the chain corresponds to 43-56 (SQYLCSFSPTWKTR). A helical membrane pass occupies residues 57–75 (FLTDFVVLIVPMVATLTIW). The Lumenal segment spans residues 76-81 (ASFILL). The helical transmembrane segment at 82 to 98 (ELLGVIIFGAGLLYQIY) threads the bilayer. Over 99 to 131 (RRRTCYARLPFLKILEKFLNISLESEYNPAISC) the chain is Cytoplasmic. Residues 132–152 (FRVITSAFTAIAILAVDFPLF) traverse the membrane as a helical segment. The Lumenal portion of the chain corresponds to 153–162 (PRRFAKTELY). A helical membrane pass occupies residues 163–183 (GTGAMDFGVGGFVFGSAMVCL). Residues 184–202 (EVRRRKYMEGSKLHYFTNS) are Cytoplasmic-facing. A helical membrane pass occupies residues 203 to 223 (LYSVWPLVFLGIGRLAIIKSI). Over 224–237 (GYQEHLTEYGVHWN) the chain is Lumenal. Residues 238-258 (FFFTIIVVKLITPLLLIIFPL) traverse the membrane as a helical segment. Residues 259–260 (NK) lie on the Cytoplasmic side of the membrane. A helical transmembrane segment spans residues 261 to 281 (SWIIALGITVLYQLALDFTSL). Residues 282–305 (KRLILYGTDGSGTRVGLLNANREG) are Lumenal-facing. The helical transmembrane segment at 306–326 (IISTLGYVAIHMAGVQTGLYM) threads the bilayer. Residues 327-338 (HKNRSHIKDLIK) lie on the Cytoplasmic side of the membrane. Residues 339–359 (VACFLLLAAISLFISLYVVQV) form a helical membrane-spanning segment. The Lumenal portion of the chain corresponds to 360-370 (NVEAVSRRMAN). The helical transmembrane segment at 371-391 (LAFCIWIVASSLILLSSLLLG) threads the bilayer. At 392-448 (DIILSFAKFLIKGALVPCSWKLIQSPVTNKKHSESLVPEAERMEPSLCLITALNRKQ) the chain is on the cytoplasmic side. The residue at position 416 (Ser-416) is a Phosphoserine. The helical transmembrane segment at 449 to 469 (LIFFLLSNITTGLINLMVDTL) threads the bilayer. The Lumenal segment spans residues 470 to 473 (HSST). Residues 474–494 (LWALFVVNLYMFSNCLIVYVL) form a helical membrane-spanning segment. Residues 495 to 504 (YLQDKTVQFW) lie on the Cytoplasmic side of the membrane.

It belongs to the PIGW family.

It is found in the endoplasmic reticulum membrane. It functions in the pathway glycolipid biosynthesis; glycosylphosphatidylinositol-anchor biosynthesis. In terms of biological role, acyltransferase that catalyzes the acyl transfer from an acyl-CoA at the 2-OH position of the inositol ring of glucosaminyl phosphatidylinositol (GlcN-PI) to generate glucosaminyl acyl phosphatidylinositol (GlcN-(acyl)PI) and participates in the fourth step of GPI-anchor biosynthesis. Required for the transport of GPI-anchored proteins to the plasma membrane. Acetylation during GPI-anchor biosynthesis is not essential for the subsequent mannosylation and is usually removed soon after the attachment of GPIs to proteins. The chain is Glucosaminyl-phosphatidylinositol-acyltransferase PIGW from Homo sapiens (Human).